A 271-amino-acid polypeptide reads, in one-letter code: Formamidopyrimidine-DNA glycosylase (271 aa).

Proline 2 serves as the catalytic Schiff-base intermediate with DNA. Glutamate 3 functions as the Proton donor in the catalytic mechanism. Lysine 58 acts as the Proton donor; for beta-elimination activity in catalysis. 3 residues coordinate DNA: histidine 91, arginine 110, and arginine 152. Residues 237–271 (RVYDRAGQPCRVCGEPIRCVRLGQRATYYCPRCQR) form an FPG-type zinc finger. Arginine 261 (proton donor; for delta-elimination activity) is an active-site residue.

This sequence belongs to the FPG family. In terms of assembly, monomer. Requires Zn(2+) as cofactor.

It catalyses the reaction Hydrolysis of DNA containing ring-opened 7-methylguanine residues, releasing 2,6-diamino-4-hydroxy-5-(N-methyl)formamidopyrimidine.. The enzyme catalyses 2'-deoxyribonucleotide-(2'-deoxyribose 5'-phosphate)-2'-deoxyribonucleotide-DNA = a 3'-end 2'-deoxyribonucleotide-(2,3-dehydro-2,3-deoxyribose 5'-phosphate)-DNA + a 5'-end 5'-phospho-2'-deoxyribonucleoside-DNA + H(+). Involved in base excision repair of DNA damaged by oxidation or by mutagenic agents. Acts as a DNA glycosylase that recognizes and removes damaged bases. Has a preference for oxidized purines, such as 7,8-dihydro-8-oxoguanine (8-oxoG). Has AP (apurinic/apyrimidinic) lyase activity and introduces nicks in the DNA strand. Cleaves the DNA backbone by beta-delta elimination to generate a single-strand break at the site of the removed base with both 3'- and 5'-phosphates. The protein is Formamidopyrimidine-DNA glycosylase of Methylococcus capsulatus (strain ATCC 33009 / NCIMB 11132 / Bath).